Consider the following 429-residue polypeptide: 3-oxo-tetronate kinase (429 aa).

Residues serine 268, 366–369 (GGET), and glycine 410 each bind ATP.

This sequence belongs to the four-carbon acid sugar kinase family.

It catalyses the reaction 3-dehydro-L-erythronate + ATP = 3-dehydro-4-O-phospho-L-erythronate + ADP + H(+). It carries out the reaction 3-dehydro-D-erythronate + ATP = 3-dehydro-4-O-phospho-D-erythronate + ADP + H(+). In terms of biological role, catalyzes the ATP-dependent phosphorylation of 3-oxo-tetronate to 3-oxo-tetronate 4-phosphate. The protein is 3-oxo-tetronate kinase of Pseudomonas savastanoi pv. phaseolicola (strain 1448A / Race 6) (Pseudomonas syringae pv. phaseolicola (strain 1448A / Race 6)).